A 479-amino-acid polypeptide reads, in one-letter code: Ribulose bisphosphate carboxylase large chain (479 aa).

Positions 1–2 (MS) are excised as a propeptide. At Pro3 the chain carries N-acetylproline. N6,N6,N6-trimethyllysine is present on Lys14. Positions 123 and 173 each coordinate substrate. Lys175 serves as the catalytic Proton acceptor. Lys177 lines the substrate pocket. Residues Lys201, Asp203, and Glu204 each contribute to the Mg(2+) site. Lys201 carries the post-translational modification N6-carboxylysine. His294 acts as the Proton acceptor in catalysis. The substrate site is built by Arg295, His327, and Ser379.

Belongs to the RuBisCO large chain family. Type I subfamily. In terms of assembly, heterohexadecamer of 8 large chains and 8 small chains. The cofactor is Mg(2+).

The protein localises to the plastid. It localises to the chloroplast. The catalysed reaction is 2 (2R)-3-phosphoglycerate + 2 H(+) = D-ribulose 1,5-bisphosphate + CO2 + H2O. It catalyses the reaction D-ribulose 1,5-bisphosphate + O2 = 2-phosphoglycolate + (2R)-3-phosphoglycerate + 2 H(+). Its function is as follows. RuBisCO catalyzes two reactions: the carboxylation of D-ribulose 1,5-bisphosphate, the primary event in carbon dioxide fixation, as well as the oxidative fragmentation of the pentose substrate in the photorespiration process. Both reactions occur simultaneously and in competition at the same active site. The sequence is that of Ribulose bisphosphate carboxylase large chain from Jasminum nudiflorum (Winter jasmine).